A 215-amino-acid polypeptide reads, in one-letter code: Cytochrome b6 (215 aa).

The helical transmembrane segment at 32-52 threads the bilayer; that stretch reads IFYCLGGITLTCFLVQVATGF. Residue cysteine 35 participates in heme c binding. Heme b-binding residues include histidine 86 and histidine 100. The next 3 membrane-spanning stretches (helical) occupy residues 90 to 110, 116 to 136, and 186 to 206; these read ASMMVLMMILHVFRVYLTGGF, LTWVTGVVLAVLTASFGVTGY, and LHTFVLPLLTAVFMLMHFPMI. Heme b-binding residues include histidine 187 and histidine 202.

This sequence belongs to the cytochrome b family. PetB subfamily. The 4 large subunits of the cytochrome b6-f complex are cytochrome b6, subunit IV (17 kDa polypeptide, PetD), cytochrome f and the Rieske protein, while the 4 small subunits are PetG, PetL, PetM and PetN. The complex functions as a dimer. The cofactor is heme b. Heme c serves as cofactor.

The protein localises to the plastid. Its subcellular location is the chloroplast thylakoid membrane. Functionally, component of the cytochrome b6-f complex, which mediates electron transfer between photosystem II (PSII) and photosystem I (PSI), cyclic electron flow around PSI, and state transitions. This chain is Cytochrome b6, found in Nicotiana tomentosiformis (Tobacco).